Consider the following 686-residue polypeptide: Epsin (686 aa).

The 132-residue stretch at 14 to 145 folds into the ENTH domain; the sequence is DAVLNTPEIE…QDDQRIKEER (132 aa). Disordered stretches follow at residues 177-417 and 463-571; these read YDSD…FNNN and NSSM…TMRP. The segment covering 185–211 has biased composition (polar residues); it reads NQRDSYGGNQRDSYGGNQRDSYGGNQR. Basic and acidic residues predominate over residues 212 to 225; sequence ETTRRDSFNGRDEG. The span at 237-256 shows a compositional bias: polar residues; it reads SYDSDPYSNTRAEYENYSNR. Composition is skewed to low complexity over residues 269–340 and 383–417; these read SNNS…SGPS and NNTN…FNNN. The span at 491–503 shows a compositional bias: polar residues; sequence FDQQSGDFSNKND. A compositionally biased stretch (basic and acidic residues) spans 504–521; that stretch reads GQQKPKDTNDPWSKKDLF. The segment covering 527–547 has biased composition (low complexity); that stretch reads GNQNPNQSPVNNTNNNNNGNT. Residues 558-567 are compositionally biased toward polar residues; it reads PITSAGSTIP.

It belongs to the epsin family.

The protein localises to the membrane. It localises to the clathrin-coated pit. In terms of biological role, binds to membranes enriched in phosphatidylinositol 4,5-bisphosphate (PtdIns(4,5)P2). The protein is Epsin (epnA) of Dictyostelium discoideum (Social amoeba).